The chain runs to 208 residues: Large ribosomal subunit protein bL25 (208 aa).

It belongs to the bacterial ribosomal protein bL25 family. CTC subfamily. As to quaternary structure, part of the 50S ribosomal subunit; part of the 5S rRNA/L5/L18/L25 subcomplex. Contacts the 5S rRNA. Binds to the 5S rRNA independently of L5 and L18.

This is one of the proteins that binds to the 5S RNA in the ribosome where it forms part of the central protuberance. This Acidovorax ebreus (strain TPSY) (Diaphorobacter sp. (strain TPSY)) protein is Large ribosomal subunit protein bL25.